The primary structure comprises 625 residues: Folylpolyglutamate synthase (625 aa).

Gly-141–Ser-144 provides a ligand contact to ATP. Residues Ser-165, Glu-234, and His-262 each coordinate Mg(2+). Residues Arg-384 and Asp-414 each contribute to the ATP site.

The protein belongs to the folylpolyglutamate synthase family. The cofactor is a monovalent cation.

It is found in the mitochondrion inner membrane. It localises to the mitochondrion matrix. It catalyses the reaction (6S)-5,6,7,8-tetrahydrofolyl-(gamma-L-Glu)(n) + L-glutamate + ATP = (6S)-5,6,7,8-tetrahydrofolyl-(gamma-L-Glu)(n+1) + ADP + phosphate + H(+). The protein operates within cofactor biosynthesis; tetrahydrofolylpolyglutamate biosynthesis. Its function is as follows. Catalyzes conversion of folates to polyglutamate derivatives allowing concentration of folate compounds in the cell and the intracellular retention of these cofactors, which are important substrates for most of the folate-dependent enzymes that are involved in one-carbon transfer reactions involved in purine, pyrimidine and amino acid synthesis. Essential for organellar and whole-plant folate homeostasis. The polypeptide is Folylpolyglutamate synthase (Arabidopsis thaliana (Mouse-ear cress)).